The sequence spans 216 residues: DNA gyrase subunit B (216 aa).

Residues 140–216 (SELYLVEGDS…PDKLRYHKII (77 aa)) form the Toprim domain.

This sequence belongs to the type II topoisomerase GyrB family. As to quaternary structure, heterotetramer, composed of two GyrA and two GyrB chains. In the heterotetramer, GyrA contains the active site tyrosine that forms a transient covalent intermediate with DNA, while GyrB binds cofactors and catalyzes ATP hydrolysis.

The protein resides in the cytoplasm. It catalyses the reaction ATP-dependent breakage, passage and rejoining of double-stranded DNA.. A type II topoisomerase that negatively supercoils closed circular double-stranded (ds) DNA in an ATP-dependent manner to modulate DNA topology and maintain chromosomes in an underwound state. Negative supercoiling favors strand separation, and DNA replication, transcription, recombination and repair, all of which involve strand separation. Also able to catalyze the interconversion of other topological isomers of dsDNA rings, including catenanes and knotted rings. Type II topoisomerases break and join 2 DNA strands simultaneously in an ATP-dependent manner. This Acinetobacter venetianus (strain ATCC 31012 / DSM 23050 / BCRC 14357 / CCUG 45561 / CIP 110063 / KCTC 2702 / LMG 19082 / RAG-1) protein is DNA gyrase subunit B (gyrB).